Reading from the N-terminus, the 79-residue chain is Sec-independent protein translocase protein TatA (79 aa).

Residues 1–21 traverse the membrane as a helical segment; sequence MFSGISIWQLLILLAIVVLLF. Basic and acidic residues-rich tracts occupy residues 44–58 and 66–79; these read MKDG…RLAD and QDAE…KDKA. A disordered region spans residues 44–79; the sequence is MKDGEDEQDHKRLADDDQPQNKQDAEQKAEQEKDKA.

It belongs to the TatA/E family. The Tat system comprises two distinct complexes: a TatABC complex, containing multiple copies of TatA, TatB and TatC subunits, and a separate TatA complex, containing only TatA subunits. Substrates initially bind to the TatABC complex, which probably triggers association of the separate TatA complex to form the active translocon.

The protein localises to the cell inner membrane. Its function is as follows. Part of the twin-arginine translocation (Tat) system that transports large folded proteins containing a characteristic twin-arginine motif in their signal peptide across membranes. TatA could form the protein-conducting channel of the Tat system. This chain is Sec-independent protein translocase protein TatA, found in Alcanivorax borkumensis (strain ATCC 700651 / DSM 11573 / NCIMB 13689 / SK2).